Here is a 63-residue protein sequence, read N- to C-terminus: MKASELKDKTVEQLQEELLGLRREQFNLRMQAATGQLNQTHMMKQVRRDIARVKTILNEKAGA.

Belongs to the universal ribosomal protein uL29 family.

The protein is Large ribosomal subunit protein uL29 of Idiomarina loihiensis (strain ATCC BAA-735 / DSM 15497 / L2-TR).